We begin with the raw amino-acid sequence, 311 residues long: 4-hydroxy-tetrahydrodipicolinate synthase (311 aa).

T51 contributes to the pyruvate binding site. Y140 (proton donor/acceptor) is an active-site residue. Catalysis depends on K168, which acts as the Schiff-base intermediate with substrate. I209 provides a ligand contact to pyruvate.

This sequence belongs to the DapA family. Homotetramer; dimer of dimers.

The protein resides in the cytoplasm. The enzyme catalyses L-aspartate 4-semialdehyde + pyruvate = (2S,4S)-4-hydroxy-2,3,4,5-tetrahydrodipicolinate + H2O + H(+). It functions in the pathway amino-acid biosynthesis; L-lysine biosynthesis via DAP pathway; (S)-tetrahydrodipicolinate from L-aspartate: step 3/4. Its function is as follows. Catalyzes the condensation of (S)-aspartate-beta-semialdehyde [(S)-ASA] and pyruvate to 4-hydroxy-tetrahydrodipicolinate (HTPA). This chain is 4-hydroxy-tetrahydrodipicolinate synthase, found in Streptococcus pneumoniae (strain CGSP14).